Consider the following 257-residue polypeptide: Aspartate/glutamate leucyltransferase (257 aa).

This sequence belongs to the R-transferase family. Bpt subfamily.

Its subcellular location is the cytoplasm. The catalysed reaction is N-terminal L-glutamyl-[protein] + L-leucyl-tRNA(Leu) = N-terminal L-leucyl-L-glutamyl-[protein] + tRNA(Leu) + H(+). It carries out the reaction N-terminal L-aspartyl-[protein] + L-leucyl-tRNA(Leu) = N-terminal L-leucyl-L-aspartyl-[protein] + tRNA(Leu) + H(+). Functionally, functions in the N-end rule pathway of protein degradation where it conjugates Leu from its aminoacyl-tRNA to the N-termini of proteins containing an N-terminal aspartate or glutamate. The chain is Aspartate/glutamate leucyltransferase from Rhodopseudomonas palustris (strain HaA2).